The sequence spans 329 residues: MKQFWVDARPWNKDVVTTAIESGADAVVAEKAADVKRLGRITTVAPDGDLVPGKDVIECTITDKASENEAAANGKNRIVIVTTSDWTVIPLENLVAQSDKIIAEVKNVHEAELAIHVLEKGVYGILLKTSDPAVVKAVAALVKSTSGSVQLVPFTVTKIHPVGMGDRVCVDTCSMLADGDGMLMGNTSSAMLLVHAETLENPYVAPRPFRVNAGAVHAYILLPDGKTAYLADLSIGGQVLVSDHKGAGRSAIVGRTKIERRPLLLVEATAEGGAKASLILQNAETIRLVAPDGSAISVVNLAPGNKILGCALEGGRHFGMAVKETIREK.

The protein belongs to the archaeal-type DHQ synthase family.

It catalyses the reaction 2-amino-2,3,7-trideoxy-D-lyxo-hept-6-ulosonate + NAD(+) + H2O = 3-dehydroquinate + NH4(+) + NADH + H(+). Catalyzes the oxidative deamination and cyclization of 2-amino-3,7-dideoxy-D-threo-hept-6-ulosonic acid (ADH) to yield 3-dehydroquinate (DHQ), which is fed into the canonical shikimic pathway of aromatic amino acid biosynthesis. This is 3-dehydroquinate synthase from Methanoregula boonei (strain DSM 21154 / JCM 14090 / 6A8).